A 482-amino-acid polypeptide reads, in one-letter code: tRNA sulfurtransferase (482 aa).

One can recognise a THUMP domain in the interval 61–165; the sequence is AAIVAELTRI…DERLILVTAR (105 aa). ATP contacts are provided by residues 183 to 184, lysine 265, glycine 287, and glutamine 296; that span reads LI. An intrachain disulfide couples cysteine 344 to cysteine 456. Positions 404–482 constitute a Rhodanese domain; that stretch reads FSHNDVILDI…GFKNVKVYRP (79 aa). Cysteine 456 serves as the catalytic Cysteine persulfide intermediate.

This sequence belongs to the ThiI family.

Its subcellular location is the cytoplasm. It carries out the reaction [ThiI sulfur-carrier protein]-S-sulfanyl-L-cysteine + a uridine in tRNA + 2 reduced [2Fe-2S]-[ferredoxin] + ATP + H(+) = [ThiI sulfur-carrier protein]-L-cysteine + a 4-thiouridine in tRNA + 2 oxidized [2Fe-2S]-[ferredoxin] + AMP + diphosphate. The catalysed reaction is [ThiS sulfur-carrier protein]-C-terminal Gly-Gly-AMP + S-sulfanyl-L-cysteinyl-[cysteine desulfurase] + AH2 = [ThiS sulfur-carrier protein]-C-terminal-Gly-aminoethanethioate + L-cysteinyl-[cysteine desulfurase] + A + AMP + 2 H(+). Its pathway is cofactor biosynthesis; thiamine diphosphate biosynthesis. Functionally, catalyzes the ATP-dependent transfer of a sulfur to tRNA to produce 4-thiouridine in position 8 of tRNAs, which functions as a near-UV photosensor. Also catalyzes the transfer of sulfur to the sulfur carrier protein ThiS, forming ThiS-thiocarboxylate. This is a step in the synthesis of thiazole, in the thiamine biosynthesis pathway. The sulfur is donated as persulfide by IscS. The sequence is that of tRNA sulfurtransferase from Erwinia tasmaniensis (strain DSM 17950 / CFBP 7177 / CIP 109463 / NCPPB 4357 / Et1/99).